The following is a 341-amino-acid chain: Methionine import ATP-binding protein MetN 1 (341 aa).

One can recognise an ABC transporter domain in the interval 2-241 (IEFRQVSKSF…PKTTIAQNFV (240 aa)). 38-45 (GYSGAGKS) contributes to the ATP binding site.

It belongs to the ABC transporter superfamily. Methionine importer (TC 3.A.1.24) family. The complex is composed of two ATP-binding proteins (MetN), two transmembrane proteins (MetI) and a solute-binding protein (MetQ).

Its subcellular location is the cell membrane. The enzyme catalyses L-methionine(out) + ATP + H2O = L-methionine(in) + ADP + phosphate + H(+). It carries out the reaction D-methionine(out) + ATP + H2O = D-methionine(in) + ADP + phosphate + H(+). Functionally, part of the ABC transporter complex MetNIQ involved in methionine import. Responsible for energy coupling to the transport system. The polypeptide is Methionine import ATP-binding protein MetN 1 (Staphylococcus aureus (strain bovine RF122 / ET3-1)).